A 239-amino-acid chain; its full sequence is Fatty acid metabolism regulator protein (239 aa).

Positions glutamine 6–phenylalanine 74 constitute an HTH gntR-type domain. A DNA-binding region (H-T-H motif) is located at residues glutamate 34–glutamine 53.

Homodimer.

Its subcellular location is the cytoplasm. Multifunctional regulator of fatty acid metabolism. This Klebsiella pneumoniae subsp. pneumoniae (strain ATCC 700721 / MGH 78578) protein is Fatty acid metabolism regulator protein.